The following is a 39-amino-acid chain: Cytochrome b6-f complex subunit 5 (39 aa).

Residues 5 to 25 form a helical membrane-spanning segment; it reads LLCGIVLGLVPVTLLGLFVSA.

This sequence belongs to the PetG family. In terms of assembly, the 4 large subunits of the cytochrome b6-f complex are cytochrome b6, subunit IV (17 kDa polypeptide, PetD), cytochrome f and the Rieske protein, while the 4 small subunits are PetG, PetL, PetM and PetN. The complex functions as a dimer.

It is found in the cellular thylakoid membrane. Its function is as follows. Component of the cytochrome b6-f complex, which mediates electron transfer between photosystem II (PSII) and photosystem I (PSI), cyclic electron flow around PSI, and state transitions. PetG is required for either the stability or assembly of the cytochrome b6-f complex. This Prochlorococcus marinus (strain NATL1A) protein is Cytochrome b6-f complex subunit 5.